A 66-amino-acid chain; its full sequence is Beta-defensin 134 (66 aa).

Residues Met-1 to Ala-19 form the signal peptide. 3 disulfides stabilise this stretch: Cys-32/Cys-58, Cys-38/Cys-52, and Cys-42/Cys-59.

Belongs to the beta-defensin family.

The protein resides in the secreted. Functionally, has antibacterial activity. The sequence is that of Beta-defensin 134 (DEFB134) from Homo sapiens (Human).